We begin with the raw amino-acid sequence, 125 residues long: Ribosome-binding factor A (125 aa).

The protein belongs to the RbfA family. Monomer. Binds 30S ribosomal subunits, but not 50S ribosomal subunits or 70S ribosomes.

The protein resides in the cytoplasm. Its function is as follows. One of several proteins that assist in the late maturation steps of the functional core of the 30S ribosomal subunit. Associates with free 30S ribosomal subunits (but not with 30S subunits that are part of 70S ribosomes or polysomes). Required for efficient processing of 16S rRNA. May interact with the 5'-terminal helix region of 16S rRNA. This is Ribosome-binding factor A from Kosmotoga olearia (strain ATCC BAA-1733 / DSM 21960 / TBF 19.5.1).